A 472-amino-acid chain; its full sequence is Cell division protein FtsP (472 aa).

The tat-type signal signal peptide spans 1–27 (MSLSRRQFIQASGIALCAGAMPLTARA).

It belongs to the FtsP family. Predicted to be exported by the Tat system. The position of the signal peptide cleavage has not been experimentally proven.

It localises to the periplasm. Its function is as follows. Cell division protein that is required for growth during stress conditions. May be involved in protecting or stabilizing the divisomal assembly under conditions of stress. The protein is Cell division protein FtsP of Dickeya dadantii (strain 3937) (Erwinia chrysanthemi (strain 3937)).